The primary structure comprises 548 residues: Nodulation protein NolO (548 aa).

Belongs to the NodU/CmcH family.

Its function is as follows. Involved in 6-O-carbamoylation of Nod-factors. This Bradyrhizobium diazoefficiens (strain JCM 10833 / BCRC 13528 / IAM 13628 / NBRC 14792 / USDA 110) protein is Nodulation protein NolO (nolO).